A 361-amino-acid polypeptide reads, in one-letter code: Aromatic amino acid aminotransferase (361 aa).

Lys-221 bears the N6-(pyridoxal phosphate)lysine mark.

The protein belongs to the class-II pyridoxal-phosphate-dependent aminotransferase family. As to quaternary structure, homodimer. Pyridoxal 5'-phosphate is required as a cofactor.

The catalysed reaction is an aromatic L-alpha-amino acid + 2-oxoglutarate = an aromatic oxo-acid + L-glutamate. Aminotransferase that catalyzes the conversion of aromatic amino acids and 2-oxoglutarate into corresponding aromatic oxo acids and L-glutamate. This Mycobacterium marinum (strain ATCC BAA-535 / M) protein is Aromatic amino acid aminotransferase.